A 399-amino-acid polypeptide reads, in one-letter code: Methylthioribose kinase (399 aa).

ATP-binding positions include Asn-40, Lys-57, and 111–113 (EDL). Asp-229 contacts substrate. Position 246–248 (246–248 (DAE)) interacts with ATP. Arg-344 is a substrate binding site.

Belongs to the methylthioribose kinase family. As to quaternary structure, homodimer.

It carries out the reaction 5-(methylsulfanyl)-D-ribose + ATP = 5-(methylsulfanyl)-alpha-D-ribose 1-phosphate + ADP + H(+). The protein operates within amino-acid biosynthesis; L-methionine biosynthesis via salvage pathway; S-methyl-5-thio-alpha-D-ribose 1-phosphate from S-methyl-5'-thioadenosine (hydrolase route): step 2/2. In terms of biological role, catalyzes the phosphorylation of methylthioribose into methylthioribose-1-phosphate. The chain is Methylthioribose kinase from Cronobacter sakazakii (strain ATCC BAA-894) (Enterobacter sakazakii).